A 331-amino-acid chain; its full sequence is Phenylalanine--tRNA ligase alpha subunit (331 aa).

Glu252 lines the Mg(2+) pocket.

Belongs to the class-II aminoacyl-tRNA synthetase family. Phe-tRNA synthetase alpha subunit type 1 subfamily. Tetramer of two alpha and two beta subunits. It depends on Mg(2+) as a cofactor.

It is found in the cytoplasm. The catalysed reaction is tRNA(Phe) + L-phenylalanine + ATP = L-phenylalanyl-tRNA(Phe) + AMP + diphosphate + H(+). In Xanthomonas axonopodis pv. citri (strain 306), this protein is Phenylalanine--tRNA ligase alpha subunit.